Here is a 2804-residue protein sequence, read N- to C-terminus: Nipped-B-like protein (2804 aa).

Polar residues-rich tracts occupy residues 128-173 (LSQN…QNSP) and 191-208 (HPSS…SVSS). Residues 128–340 (LSQNSMHSSP…LGKDEKEQSE (213 aa)) are disordered. Phosphoserine occurs at positions 150 and 162. Positions 234–249 (HHADNPRHGSSEDYLH) are enriched in basic and acidic residues. Residues S243, S256, S274, S280, S284, S301, S306, and S318 each carry the phosphoserine modification. The segment covering 331-340 (LGKDEKEQSE) has biased composition (basic and acidic residues). S350 carries the phosphoserine modification. Positions 482-500 (RESAIERERFSKEVQDKDK) are enriched in basic and acidic residues. Residues 482 to 946 (RESAIERERF…NKAEFPSYLL (465 aa)) are disordered. The segment covering 523-534 (PASQETGSTGNG) has biased composition (polar residues). 4 stretches are compositionally biased toward basic and acidic residues: residues 562 to 572 (DSIKKPEEIKQ), 593 to 663 (PENH…ECKQ), 672 to 685 (KQNE…KPND), and 694 to 939 (ETTK…DNKA). Phosphothreonine is present on residues T713 and T746. The residue at position 912 (S912) is a Phosphoserine. The PxVxL motif signature appears at 996–1009 (NKGAKPVVVLQKLS). Disordered regions lie at residues 1017 to 1047 (IKDR…DQSV) and 1060 to 1191 (ESTM…LTPE). K1082 is subject to N6-acetyllysine. Residues S1089, S1090, and S1096 each carry the phosphoserine modification. Acidic residues predominate over residues 1089 to 1100 (SSDEDNDSDEAF). The segment covering 1109–1139 (KDDDKAWEYEERDRRSSGDHRRSGHSHEGRR) has biased composition (basic and acidic residues). S1150, S1152, and S1154 each carry phosphoserine. A Phosphotyrosine modification is found at Y1159. Position 1160 is a phosphoserine (S1160). Over residues 1171–1182 (KMKKKEKQKKRK) the composition is skewed to basic residues. Position 1189 is a phosphothreonine (T1189). S1197 is subject to Phosphoserine. Positions 1691-1710 (AMKSQKDEESSEGTHHAKEI) are disordered. HEAT repeat units follow at residues 1767 to 1805 (AQSF…VDPS), 1843 to 1881 (PQLA…EQPT), 1945 to 1984 (YDWF…HILK), 2227 to 2267 (VNLK…LKEM), and 2313 to 2351 (LIHP…KYAG). Basic and acidic residues predominate over residues 2473–2489 (VKDKRKERKSSPSKENE). Disordered regions lie at residues 2473–2520 (VKDK…DDIN) and 2651–2696 (TSLL…DSTE). Residues S2493, S2509, S2511, S2513, S2515, S2652, and S2658 each carry the phosphoserine modification. A compositionally biased stretch (acidic residues) spans 2510–2519 (DSDSDSEDDI). The residue at position 2667 (T2667) is a Phosphothreonine. S2672 is modified (phosphoserine).

It belongs to the SCC2/Nipped-B family. Heterodimerizes with MAU2/SCC4 to form the cohesin loading complex. The NIPBL-MAU2 heterodimer interacts with the cohesin complex composed of SMC1A/B and SMC3 heterodimer, RAD21 and STAG1/SA1. NIPBL directly contacts all members of the complex, RAD21, SMC1A/B, SMC3 and STAG1. Interacts directly (via PxVxL motif) with CBX5. Interacts with ZNF609 (via N-terminus). Interacts with the multiprotein complex Integrator. Interacts (via PxVxL motif) with CBX3. Interacts with BRD4. Widely expressed. Highly expressed in heart, skeletal muscle, fetal and adult liver, fetal and adult kidney. Expressed at intermediates level in thymus, placenta, peripheral leukocyte and small intestine. Weakly or not expressed in brain, colon, spleen and lung.

It is found in the nucleus. Its subcellular location is the chromosome. In terms of biological role, plays an important role in the loading of the cohesin complex on to DNA. Forms a heterodimeric complex (also known as cohesin loading complex) with MAU2/SCC4 which mediates the loading of the cohesin complex onto chromatin. Plays a role in cohesin loading at sites of DNA damage. Its recruitment to double-strand breaks (DSBs) sites occurs in a CBX3-, RNF8- and RNF168-dependent manner whereas its recruitment to UV irradiation-induced DNA damage sites occurs in a ATM-, ATR-, RNF8- and RNF168-dependent manner. Along with ZNF609, promotes cortical neuron migration during brain development by regulating the transcription of crucial genes in this process. Preferentially binds promoters containing paused RNA polymerase II. Up-regulates the expression of SEMA3A, NRP1, PLXND1 and GABBR2 genes, among others. This chain is Nipped-B-like protein (NIPBL), found in Homo sapiens (Human).